Reading from the N-terminus, the 463-residue chain is Asparagine--tRNA ligase (463 aa).

The protein belongs to the class-II aminoacyl-tRNA synthetase family. Homodimer.

It is found in the cytoplasm. It carries out the reaction tRNA(Asn) + L-asparagine + ATP = L-asparaginyl-tRNA(Asn) + AMP + diphosphate + H(+). This chain is Asparagine--tRNA ligase, found in Bacillus cereus (strain ATCC 10987 / NRS 248).